We begin with the raw amino-acid sequence, 1027 residues long: A-factor-processing enzyme (1027 aa).

His118 contacts Zn(2+). Catalysis depends on Glu121, which acts as the Proton acceptor. Zn(2+) contacts are provided by His122 and Glu199.

It belongs to the peptidase M16 family. Zn(2+) is required as a cofactor.

Its subcellular location is the membrane. With respect to regulation, inhibited by chelating agents like EDTA, TPEN and 1,1-phenanthroline, as well as NEM, free cysteine and DTT. Involved in the N-terminal endoproteolytic cleavage of the P2 precursor of the a-factor mating pheromone. Capable of proteolysing the established mammalian insulin-degrading enzymes (IDEs) substrates amyloid-beta peptide and insulin B-chain. The sequence is that of A-factor-processing enzyme (STE23) from Saccharomyces cerevisiae (strain ATCC 204508 / S288c) (Baker's yeast).